Consider the following 137-residue polypeptide: MLQPKRTKFRKVHKGRNRGLANAGSDVSFGTYGLKAVTRGQLTARQIEAARRAMTRAVKRQGKIWIRVFPDKPITEKPLEVRMGKGKGNVEYWVALIQPGKVLYEMDGVPEETAREAFALAAAKLSVKTTFVIRTAM.

Belongs to the universal ribosomal protein uL16 family. In terms of assembly, part of the 50S ribosomal subunit.

Binds 23S rRNA and is also seen to make contacts with the A and possibly P site tRNAs. The polypeptide is Large ribosomal subunit protein uL16 (Tolumonas auensis (strain DSM 9187 / NBRC 110442 / TA 4)).